An 85-amino-acid polypeptide reads, in one-letter code: U4-theraphotoxin-Hhn1a (85 aa).

A signal peptide spans 1-22; sequence MKVTLIAILTCAAVLVLHTTAA. A propeptide spanning residues 23–48 is cleaved from the precursor; it reads EELEAESQLMEVGMPDTELAAVDEER. Disulfide bonds link C52–C66, C56–C77, and C71–C82.

This sequence belongs to the neurotoxin 12 (Hwtx-2) family. 02 (Hwtx-2) subfamily. In terms of assembly, monomer. As to expression, expressed by the venom gland.

It is found in the secreted. In terms of biological role, neurotoxin active on both insects and mammals. This chain is U4-theraphotoxin-Hhn1a, found in Cyriopagopus hainanus (Chinese bird spider).